Here is a 187-residue protein sequence, read N- to C-terminus: Peptidyl-tRNA hydrolase (187 aa).

Residue Tyr14 coordinates tRNA. His19 functions as the Proton acceptor in the catalytic mechanism. TRNA is bound by residues Phe60 and Asn62.

It belongs to the PTH family. In terms of assembly, monomer.

The protein resides in the cytoplasm. It carries out the reaction an N-acyl-L-alpha-aminoacyl-tRNA + H2O = an N-acyl-L-amino acid + a tRNA + H(+). Functionally, hydrolyzes ribosome-free peptidyl-tRNAs (with 1 or more amino acids incorporated), which drop off the ribosome during protein synthesis, or as a result of ribosome stalling. In terms of biological role, catalyzes the release of premature peptidyl moieties from peptidyl-tRNA molecules trapped in stalled 50S ribosomal subunits, and thus maintains levels of free tRNAs and 50S ribosomes. In Pseudothermotoga lettingae (strain ATCC BAA-301 / DSM 14385 / NBRC 107922 / TMO) (Thermotoga lettingae), this protein is Peptidyl-tRNA hydrolase.